The sequence spans 275 residues: Thiazole synthase (275 aa).

K108 serves as the catalytic Schiff-base intermediate with DXP. 1-deoxy-D-xylulose 5-phosphate-binding positions include G169, 196–197 (AG), and 218–219 (NT).

Belongs to the ThiG family. Homotetramer. Forms heterodimers with either ThiH or ThiS.

It localises to the cytoplasm. It carries out the reaction [ThiS sulfur-carrier protein]-C-terminal-Gly-aminoethanethioate + 2-iminoacetate + 1-deoxy-D-xylulose 5-phosphate = [ThiS sulfur-carrier protein]-C-terminal Gly-Gly + 2-[(2R,5Z)-2-carboxy-4-methylthiazol-5(2H)-ylidene]ethyl phosphate + 2 H2O + H(+). Its pathway is cofactor biosynthesis; thiamine diphosphate biosynthesis. Functionally, catalyzes the rearrangement of 1-deoxy-D-xylulose 5-phosphate (DXP) to produce the thiazole phosphate moiety of thiamine. Sulfur is provided by the thiocarboxylate moiety of the carrier protein ThiS. In vitro, sulfur can be provided by H(2)S. The protein is Thiazole synthase of Ralstonia pickettii (strain 12J).